The chain runs to 125 residues: Large ribosomal subunit protein bL12 (125 aa).

Belongs to the bacterial ribosomal protein bL12 family. In terms of assembly, homodimer. Part of the ribosomal stalk of the 50S ribosomal subunit. Forms a multimeric L10(L12)X complex, where L10 forms an elongated spine to which 2 to 4 L12 dimers bind in a sequential fashion. Binds GTP-bound translation factors.

In terms of biological role, forms part of the ribosomal stalk which helps the ribosome interact with GTP-bound translation factors. Is thus essential for accurate translation. This Campylobacter concisus (strain 13826) protein is Large ribosomal subunit protein bL12.